The chain runs to 164 residues: Heat shock protein beta-6 (164 aa).

An involved in stabilization of the HSPB1:HSBP6 heterodimer region spans residues 1-72 (MEIPVSVQPS…PTAQVSTDPG (72 aa)). Ser16 carries the post-translational modification Phosphoserine. Positions 56–163 (RAPSVALPTA…PLQSPPGAAA (108 aa)) constitute a sHSP domain. Residue Gln66 is modified to Deamidated glutamine. Ser157 bears the Phosphoserine mark.

Belongs to the small heat shock protein (HSP20) family. Homodimer. Small heat shock proteins form high molecular mass oligomers containing variable number of monomers; these oligomers display a very flexible quaternary structure easily exchanging their subunits. Heterooligomer with HSPB1; formed through oligomerization of HSPB1:HSBP6 dimers; subunit exchange leads to formation of at least two different heterooligomeric complexes, differing in variable quantities of HSPB1 and HSPB6 homodimers in addition to HSPB1:HSPB6 heterodimers. Heterooligomer with CRYAB; large heterooligomers consist of CRYAB homodimers and HSPB5:HSPB6 heterodimers but lacking HSPB6 homodimers. Interacts with BAG3. Interacts (phosphorylated) with YWHAZ. Interacts with PDE4A and PDE4D; required for maintenance of the non-phosphorylated state of HSPB6 under basal conditions. Interacts with KDR. Interacts with PRKD1. In terms of processing, phosphorylated at Ser-16 by PKA and probably PKD1K; required to protect cardiomyocytes from apoptosis.

Its subcellular location is the cytoplasm. It localises to the nucleus. It is found in the secreted. Functionally, small heat shock protein which functions as a molecular chaperone probably maintaining denatured proteins in a folding-competent state. Seems to have versatile functions in various biological processes. Plays a role in regulating muscle function such as smooth muscle vasorelaxation and cardiac myocyte contractility. May regulate myocardial angiogenesis implicating KDR. Overexpression mediates cardioprotection and angiogenesis after induced damage. Stabilizes monomeric YWHAZ thereby supporting YWHAZ chaperone-like activity. This is Heat shock protein beta-6 (HSPB6) from Bos taurus (Bovine).